A 229-amino-acid chain; its full sequence is Protein FAM3C (229 aa).

Residues 1 to 24 form the signal peptide; that stretch reads MRIAGAIKFVVAVALFLLTFYVIS. Intrachain disulfides connect C59–C87 and C65–C222. Positions 68-226 constitute a GG-type lectin domain; sequence KHFAFKIASG…VEMEGCIPQK (159 aa).

The protein belongs to the FAM3 family. In terms of tissue distribution, expressed in the retinal ganglion cell layer.

The protein resides in the secreted. Functionally, involved in retinal laminar formation. The protein is Protein FAM3C (fam3c) of Xenopus laevis (African clawed frog).